The primary structure comprises 53 residues: Lupus La protein homolog (53 aa).

Residues Gly-1–Asp-13 show a composition bias toward basic and acidic residues. The interval Gly-1–Gln-53 is disordered. Lys-8 is subject to N6-acetyllysine. Thr-10 carries the post-translational modification Phosphothreonine. A Phosphoserine modification is found at Ser-14. Basic and acidic residues predominate over residues Arg-29 to Ala-40.

As to quaternary structure, interacts with DDX15. May interact with RUFY1. Phosphorylated.

The protein resides in the nucleus. Its function is as follows. Binds to the 3' poly(U) terminus of nascent RNA polymerase III transcripts, protecting them from exonuclease digestion and facilitating their folding and maturation. The protein is Lupus La protein homolog (SSB) of Oryctolagus cuniculus (Rabbit).